The sequence spans 267 residues: Glutamate 5-kinase (267 aa).

Residue lysine 14 coordinates ATP. Serine 54, aspartate 141, and asparagine 157 together coordinate substrate. ATP-binding positions include 177–178 and 219–225; these read SD and TGGMLSK.

It belongs to the glutamate 5-kinase family.

The protein localises to the cytoplasm. The enzyme catalyses L-glutamate + ATP = L-glutamyl 5-phosphate + ADP. It participates in amino-acid biosynthesis; L-proline biosynthesis; L-glutamate 5-semialdehyde from L-glutamate: step 1/2. Catalyzes the transfer of a phosphate group to glutamate to form L-glutamate 5-phosphate. This is Glutamate 5-kinase from Streptococcus agalactiae serotype Ia (strain ATCC 27591 / A909 / CDC SS700).